Reading from the N-terminus, the 202-residue chain is Outer-membrane lipoprotein LolB (202 aa).

Positions 1-24 are cleaved as a signal peptide; sequence MESKEQHLIRQYFILAMFFLFLAG. Cysteine 25 carries the N-palmitoyl cysteine lipid modification. Cysteine 25 carries S-diacylglycerol cysteine lipidation.

The protein belongs to the LolB family. In terms of assembly, monomer.

The protein resides in the cell outer membrane. Functionally, plays a critical role in the incorporation of lipoproteins in the outer membrane after they are released by the LolA protein. This chain is Outer-membrane lipoprotein LolB, found in Pseudoalteromonas translucida (strain TAC 125).